Consider the following 285-residue polypeptide: Dihydropteroate synthase (285 aa).

The Pterin-binding domain maps to 18–276 (PKIMGIVNLT…DVKATADALK (259 aa)). Position 25 (Asn25) interacts with Mg(2+). (7,8-dihydropterin-6-yl)methyl diphosphate is bound by residues Thr66, Asp99, Asn119, Asp190, Lys229, and 264–266 (RVH).

Belongs to the DHPS family. Homodimer. Mg(2+) is required as a cofactor.

It catalyses the reaction (7,8-dihydropterin-6-yl)methyl diphosphate + 4-aminobenzoate = 7,8-dihydropteroate + diphosphate. It participates in cofactor biosynthesis; tetrahydrofolate biosynthesis; 7,8-dihydrofolate from 2-amino-4-hydroxy-6-hydroxymethyl-7,8-dihydropteridine diphosphate and 4-aminobenzoate: step 1/2. Its function is as follows. Catalyzes the condensation of para-aminobenzoate (pABA) with 6-hydroxymethyl-7,8-dihydropterin diphosphate (DHPt-PP) to form 7,8-dihydropteroate (H2Pte), the immediate precursor of folate derivatives. The polypeptide is Dihydropteroate synthase (folP) (Neisseria meningitidis serogroup B (strain ATCC BAA-335 / MC58)).